The chain runs to 476 residues: Adenosylhomocysteinase (476 aa).

Residues T67, D142, and E202 each coordinate substrate. 203–205 (TTT) contributes to the NAD(+) binding site. Substrate is bound by residues K232 and D236. NAD(+) contacts are provided by residues N237, 266 to 271 (GYGDVG), E289, N324, 345 to 347 (IGH), and N390.

Belongs to the adenosylhomocysteinase family. NAD(+) is required as a cofactor.

Its subcellular location is the cytoplasm. The enzyme catalyses S-adenosyl-L-homocysteine + H2O = L-homocysteine + adenosine. Its pathway is amino-acid biosynthesis; L-homocysteine biosynthesis; L-homocysteine from S-adenosyl-L-homocysteine: step 1/1. May play a key role in the regulation of the intracellular concentration of adenosylhomocysteine. The polypeptide is Adenosylhomocysteinase (Synechococcus sp. (strain CC9605)).